The following is a 299-amino-acid chain: Probable tyrosine phosphatase protein J4 (299 aa).

Residues 16 to 289 (VEALDFLSFM…VYCYQALYVW (274 aa)) enclose the Tyrosine-protein phosphatase domain. Cysteine 230 serves as the catalytic Phosphocysteine intermediate.

It belongs to the protein-tyrosine phosphatase family.

The enzyme catalyses O-phospho-L-tyrosyl-[protein] + H2O = L-tyrosyl-[protein] + phosphate. The chain is Probable tyrosine phosphatase protein J4 (J5) from Microplitis demolitor bracovirus (isolate Webb) (MdBV).